Consider the following 635-residue polypeptide: UvrABC system protein C (635 aa).

Positions 20–97 (ERSGVYRMFD…IKKFQPKFNI (78 aa)) constitute a GIY-YIG domain. The region spanning 207–242 (KELQENLSKKMEELSEQMRFEEAAEIRDRIKALSYV) is the UVR domain.

This sequence belongs to the UvrC family. As to quaternary structure, interacts with UvrB in an incision complex.

It localises to the cytoplasm. Functionally, the UvrABC repair system catalyzes the recognition and processing of DNA lesions. UvrC both incises the 5' and 3' sides of the lesion. The N-terminal half is responsible for the 3' incision and the C-terminal half is responsible for the 5' incision. The protein is UvrABC system protein C of Rickettsia bellii (strain RML369-C).